The following is a 587-amino-acid chain: Kelch-like ECH-associated protein 1B (587 aa).

The BTB domain occupies 44 to 117 (CDVTLRVRYC…AYTASISVGE (74 aa)). The BACK domain maps to 153-253 (IGIASFAEQI…LTPHFLQRQL (101 aa)). Kelch repeat units lie at residues 292–337 (LIYT…VISG), 338–388 (LLYA…VIDG), 389–435 (MIYA…VINR), 436–482 (LLYA…ALGN), 484–529 (IYVM…THHG), and 530–576 (RIYV…VTME).

It belongs to the KEAP1 family. In terms of assembly, homodimer and heterodimer; heterodimerizes with keap1a. Component of the BCR(KEAP1) E3 ubiquitin ligase complex, at least composed of 2 molecules of cul3, 2 molecules of keap1 (keap1a and/or keap1b), and rbx1. Interacts with nfe2l2/nrf2; the interaction is direct. In terms of processing, non-enzymatic covalent modifications of reactive cysteines by electrophile metabolites inactivate the BCR(KEAP1) complex. In terms of tissue distribution, widely expressed.

The protein localises to the cytoplasm. It is found in the nucleus. Its pathway is protein modification; protein ubiquitination. Ubiquitin ligase activity of the BCR(KEAP1) complex is inhibited by oxidative stress and electrophile metabolites such as sulforaphane. Electrophile metabolites react with reactive cysteine residues in keap1 and trigger non-enzymatic covalent modifications of these cysteine residues, leading to inactivate the ubiquitin ligase activity of the BCR(KEAP1) complex. In terms of biological role, substrate-specific adapter of a BCR (BTB-CUL3-RBX1) E3 ubiquitin ligase complex that regulates the response to oxidative stress by targeting nfe2l2/nrf2 for ubiquitination. Keap1 acts as a key sensor of oxidative and electrophilic stress: in normal conditions, the BCR(KEAP1) complex mediates ubiquitination and degradation of nfe2l2/nrf2, a transcription factor regulating expression of many cytoprotective genes. In response to oxidative stress, different electrophile metabolites trigger non-enzymatic covalent modifications of highly reactive cysteine residues in KEAP1, leading to inactivate the ubiquitin ligase activity of the BCR(KEAP1) complex, promoting nfe2l2/nrf2 nuclear accumulation and expression of phase II detoxifying enzymes. The sequence is that of Kelch-like ECH-associated protein 1B from Danio rerio (Zebrafish).